The primary structure comprises 804 residues: MLVSYRWLGEYVDLTGITAKELAERITKSGIEVERVEALDRGMKGVVIGHVLECEPHPNADKLRKCLVDLGEDEPVQIICGAPNVAKGQKVAVAKVGAVLPGNFKIKRAKLRGEESNGMICSLQELGVETKVVPKEYADGIFVFPSDAPIGADAIEWLGLHDEVLELSLTPNRADCLSMIGVAYEVAAILGRDVKLPEAAVKENSEHVHEYISVRVEAPEDNPLYAGRIVKNVRIGPSPLWMQARLMAAGIRPHNNVVDITNYILLEYGQPLHAFDYDRLGSKEIVVRRAKAGETIITLDDVERKLTEEHLVITNGREPVALAGVMGGANSEVRDDTTTVFIEAAYFTSPVIRQAVKDHGLRSEASTRFEKGIDPARTKEALERAAALMSEYAGGEVVGGIVEASVWRQDSVVVTVTLERINGVLGTAMSKEEVAAILSNLQFPFTEDNGTFTIHVPSRRRDIAIEEDIIEEVARLYGYDRLPATLPVAEAKPGGLTPYQAKRRRVRRYLEGAGLFQAITYSLTSPDKATRFALETAEPIRLALPMSEERSVLRQSLIPHLLEAASYNRARQVENVALYEIGSVYLSKGEHVQPAENERLAGVLTGLWHAHLWQGEKKAADFYVAKGILDGLFDLFGLAARIEYKPAKRADLHPGRTAEIALGGKVIGFVGQLHPAVQKEYDLKETYVFELALTDLLNAESEAIRYEPIPRFPSVVRDIALVVDENVEAGALKQAIEEAGKPLVKDVSLFDVYKGDRLPDGKKSLAFSLRYYDPERTLTDEEVAAVHERVLAAVEKQFGAVLRG.

Residues 40-155 (DRGMKGVVIG…SDAPIGADAI (116 aa)) enclose the tRNA-binding domain. Residues 409 to 484 (QDSVVVTVTL…RLYGYDRLPA (76 aa)) form the B5 domain. Residues Asp462, Asp468, Glu471, and Glu472 each coordinate Mg(2+). In terms of domain architecture, FDX-ACB spans 710-803 (PRFPSVVRDI…VEKQFGAVLR (94 aa)).

This sequence belongs to the phenylalanyl-tRNA synthetase beta subunit family. Type 1 subfamily. Tetramer of two alpha and two beta subunits. Mg(2+) is required as a cofactor.

It is found in the cytoplasm. The catalysed reaction is tRNA(Phe) + L-phenylalanine + ATP = L-phenylalanyl-tRNA(Phe) + AMP + diphosphate + H(+). This chain is Phenylalanine--tRNA ligase beta subunit, found in Geobacillus kaustophilus (strain HTA426).